We begin with the raw amino-acid sequence, 93 residues long: Pyrimidine/purine nucleoside phosphorylase (93 aa).

The protein belongs to the nucleoside phosphorylase PpnP family.

The enzyme catalyses a purine D-ribonucleoside + phosphate = a purine nucleobase + alpha-D-ribose 1-phosphate. The catalysed reaction is adenosine + phosphate = alpha-D-ribose 1-phosphate + adenine. It catalyses the reaction cytidine + phosphate = cytosine + alpha-D-ribose 1-phosphate. It carries out the reaction guanosine + phosphate = alpha-D-ribose 1-phosphate + guanine. The enzyme catalyses inosine + phosphate = alpha-D-ribose 1-phosphate + hypoxanthine. The catalysed reaction is thymidine + phosphate = 2-deoxy-alpha-D-ribose 1-phosphate + thymine. It catalyses the reaction uridine + phosphate = alpha-D-ribose 1-phosphate + uracil. It carries out the reaction xanthosine + phosphate = alpha-D-ribose 1-phosphate + xanthine. Catalyzes the phosphorolysis of diverse nucleosides, yielding D-ribose 1-phosphate and the respective free bases. Can use uridine, adenosine, guanosine, cytidine, thymidine, inosine and xanthosine as substrates. Also catalyzes the reverse reactions. The sequence is that of Pyrimidine/purine nucleoside phosphorylase from Tolumonas auensis (strain DSM 9187 / NBRC 110442 / TA 4).